A 199-amino-acid polypeptide reads, in one-letter code: Auxin-responsive protein IAA1 (199 aa).

Positions 25-29 (LTLRL) match the EAR-like (transcriptional repression) motif. The disordered stretch occupies residues 31-74 (GSLAAAAAPDPDRKRSSPSSSDAADAADNSSPLAAAADAPPAPK). The span at 47 to 69 (SPSSSDAADAADNSSPLAAAADA) shows a compositional bias: low complexity. The PB1 domain maps to 93–187 (AKFVKVAVDG…TCQRLRLMKS (95 aa)).

The protein belongs to the Aux/IAA family. As to quaternary structure, homodimers and heterodimers. Highly expressed in flowers. Expressed at low levels in roots and shoots.

It localises to the nucleus. Functionally, aux/IAA proteins are short-lived transcriptional factors that function as repressors of early auxin response genes at low auxin concentrations. The protein is Auxin-responsive protein IAA1 (IAA1) of Oryza sativa subsp. japonica (Rice).